A 77-amino-acid polypeptide reads, in one-letter code: UPF0248 protein Pcal_0252 (77 aa).

It belongs to the UPF0248 family.

In Pyrobaculum calidifontis (strain DSM 21063 / JCM 11548 / VA1), this protein is UPF0248 protein Pcal_0252.